The primary structure comprises 612 residues: UvrABC system protein C (612 aa).

The region spanning 20-98 is the GIY-YIG domain; sequence THSGVYRMLD…IKQHRPKYNI (79 aa). The region spanning 208–243 is the UVR domain; that stretch reads SSVLEEISANMYQASEDMEYEKAQVYRDQLVVLRKL.

It belongs to the UvrC family. In terms of assembly, interacts with UvrB in an incision complex.

The protein localises to the cytoplasm. In terms of biological role, the UvrABC repair system catalyzes the recognition and processing of DNA lesions. UvrC both incises the 5' and 3' sides of the lesion. The N-terminal half is responsible for the 3' incision and the C-terminal half is responsible for the 5' incision. In Francisella tularensis subsp. holarctica (strain LVS), this protein is UvrABC system protein C.